A 274-amino-acid chain; its full sequence is MTTSAPEDRIDQVEQAITKSRRYQTVAPATVRRLARAALVAARGDVPDAVKRTKRGLHEIYGAFLPPSPPNYAALLRQLDSAVDAGDDEAVRAALRRAMSVHVSTRERLPHLAEFYQEIFRHVPQPNTLRDLACGLNPLAAPWMGLSDQTVYVASDIDARLIGFVDAALTRLGVAHRTSVVDLLEDRLDEPTDVTLLLKTLPCLETQRRGSGWEVIDIVNSPIIVVTFPTKSLGQRSKGMFQNYSQSFESQARERSCRIQRLEIGNELIYVIQK.

S-adenosyl-L-methionine-binding positions include phenylalanine 64, 102–104, arginine 108, alanine 133, aspartate 156, 182–183, leucine 198, and glutamine 207; these read HVS and DL.

Belongs to the methyltransferase superfamily. Aminoglycoside resistance family.

It catalyses the reaction guanosine(1405) in 16S rRNA + S-adenosyl-L-methionine = N(7)-methylguanosine(1405) in 16S rRNA + S-adenosyl-L-homocysteine. Its function is as follows. Specifically methylates the N(7) position of guanine 1405 in 16S rRNA. Confers resistance to various aminoglycosides, including gentamicin and kanamycin. This Micromonospora echinospora (Micromonospora purpurea) protein is 16S rRNA (guanine(1405)-N(7))-methyltransferase (grm).